The following is a 103-amino-acid chain: Cell division protein FtsB (103 aa).

The Cytoplasmic portion of the chain corresponds to 1–3; sequence MGK. Residues 4–21 form a helical membrane-spanning segment; it reads LTLLLLAILVWLQYSLWF. At 22 to 103 the chain is on the periplasmic side; sequence GKNGIHDYTR…RAQSAGQNNR (82 aa). Residues 31-71 adopt a coiled-coil conformation; that stretch reads RVNDDVAAQQATNAKLKARNDQLFAEIDDLNGGQEALEERA.

The protein belongs to the FtsB family. In terms of assembly, part of a complex composed of FtsB, FtsL and FtsQ.

The protein resides in the cell inner membrane. Functionally, essential cell division protein. May link together the upstream cell division proteins, which are predominantly cytoplasmic, with the downstream cell division proteins, which are predominantly periplasmic. The chain is Cell division protein FtsB from Escherichia coli O157:H7.